The sequence spans 375 residues: Probable Na(+)/H(+) antiporter GerT (375 aa).

10 helical membrane passes run proline 27–isoleucine 47, alanine 89–isoleucine 109, histidine 112–leucine 132, threonine 145–methionine 165, isoleucine 183–methionine 203, leucine 204–phenylalanine 224, tyrosine 226–isoleucine 246, proline 261–phenylalanine 281, leucine 288–leucine 308, and glutamate 350–leucine 370.

Belongs to the monovalent cation:proton antiporter 2 (CPA2) transporter (TC 2.A.37) family.

The protein localises to the membrane. In terms of biological role, contributes to the success of spore outgrowth from the germinated state during alkaline or Na(+) stress. Does not have a significant role in germination. The chain is Probable Na(+)/H(+) antiporter GerT (gerT) from Bacillus cereus.